A 397-amino-acid polypeptide reads, in one-letter code: Serpin B10 (397 aa).

The Nuclear localization signal signature appears at 74 to 77 (KKRK).

It belongs to the serpin family. Ov-serpin subfamily.

The protein localises to the nucleus. It localises to the cytoplasm. Functionally, protease inhibitor that may play a role in the regulation of protease activities during hematopoiesis and apoptosis induced by TNF. May regulate protease activities in the cytoplasm and in the nucleus. The protein is Serpin B10 (SERPINB10) of Rhinolophus ferrumequinum (Greater horseshoe bat).